Reading from the N-terminus, the 101-residue chain is Small ribosomal subunit protein uS14 (101 aa).

This sequence belongs to the universal ribosomal protein uS14 family. In terms of assembly, part of the 30S ribosomal subunit. Contacts proteins S3 and S10.

In terms of biological role, binds 16S rRNA, required for the assembly of 30S particles and may also be responsible for determining the conformation of the 16S rRNA at the A site. This Protochlamydia amoebophila (strain UWE25) protein is Small ribosomal subunit protein uS14.